The following is a 406-amino-acid chain: Phosphopentomutase (406 aa).

Mn(2+) contacts are provided by Asp-10, Asp-305, His-310, Asp-346, His-347, and His-358.

This sequence belongs to the phosphopentomutase family. The cofactor is Mn(2+).

Its subcellular location is the cytoplasm. The catalysed reaction is 2-deoxy-alpha-D-ribose 1-phosphate = 2-deoxy-D-ribose 5-phosphate. The enzyme catalyses alpha-D-ribose 1-phosphate = D-ribose 5-phosphate. It participates in carbohydrate degradation; 2-deoxy-D-ribose 1-phosphate degradation; D-glyceraldehyde 3-phosphate and acetaldehyde from 2-deoxy-alpha-D-ribose 1-phosphate: step 1/2. Its function is as follows. Isomerase that catalyzes the conversion of deoxy-ribose 1-phosphate (dRib-1-P) and ribose 1-phosphate (Rib-1-P) to deoxy-ribose 5-phosphate (dRib-5-P) and ribose 5-phosphate (Rib-5-P), respectively. This is Phosphopentomutase from Vibrio vulnificus (strain CMCP6).